The primary structure comprises 1218 residues: Mgp-operon protein 3 (1218 aa).

A signal peptide spans 1 to 25; the sequence is MKSKLKLKRYLLFLPLLPLGTLSLA. Disordered stretches follow at residues 109–129, 213–245, 262–353, and 411–440; these read QESQ…SGSN, HFGS…GFKL, EPLD…AVVS, and QDAT…PALT. A compositionally biased stretch (low complexity) spans 116–129; it reads NGSQSGSSDTSGSN. Residues 217 to 231 show a composition bias toward polar residues; it reads GQESSWNSQRSQKGL. Residues 265-286 are compositionally biased toward basic and acidic residues; the sequence is DSTKEGKGKDESSWKNSEKTTA. Residues 301-342 are compositionally biased toward low complexity; it reads AGSASSLQGNGSNSSGLKSLLRSAPVSVPPSSTSNQTLSLSN. Over residues 411 to 428 the composition is skewed to polar residues; sequence QDATSTNLPHAAGASQTG. Residues 1121 to 1141 traverse the membrane as a helical segment; the sequence is VGSSVGILLILLILGLGIGIP. Residues 1192-1204 are compositionally biased toward low complexity; that stretch reads NNAAPKAPVKPAA. Positions 1192–1218 are disordered; it reads NNAAPKAPVKPAAPTAPRPPVQPPKKA. Residues 1205–1218 are compositionally biased toward pro residues; sequence PTAPRPPVQPPKKA.

The protein localises to the cell membrane. The sequence is that of Mgp-operon protein 3 from Mycoplasma pneumoniae (strain ATCC 29342 / M129 / Subtype 1) (Mycoplasmoides pneumoniae).